Here is an 85-residue protein sequence, read N- to C-terminus: Large ribosomal subunit protein uL23 (85 aa).

The protein belongs to the universal ribosomal protein uL23 family. In terms of assembly, part of the 50S ribosomal subunit. Interacts with protein L29 and weakly with protein L39e.

Its function is as follows. Binds to a specific region on the 23S rRNA. Located at the polypeptide exit tunnel on the outside of the subunit. The sequence is that of Large ribosomal subunit protein uL23 from Haloarcula marismortui (strain ATCC 43049 / DSM 3752 / JCM 8966 / VKM B-1809) (Halobacterium marismortui).